Here is a 452-residue protein sequence, read N- to C-terminus: MGKYFGTSGIRGRVGEFLTPELALRAGRALGEYLGGGTVAVGRDTRVHCDALRAAVISGLTAQGCDVVDIGVVCTPTLGCYVATEGLDAGVMITASHNPPEYNGIKFWDSDGMAFSPEQEREIEQIMDGDLEYPNWDEYGEVVDDETALNVHVERILDEVSVDGDGLRIVVDCANGPSAFVTPVVLREMGCEVISLNAHPDGHFPGREPEPKPENLKDLMRTVRATDADLGIAHDGDADRVVFVTEEGKFAGYDEVLALVCRRILEEKGPGKVAVNVDASMVIDEVVREMGGEVVRTKVGDVHVAAAIREEGCVFGGEPNGTWIHPDVHMCPDGPLSAAWMVSLLIEEGRPLSELLAEIPSYPVVRETVECPDELKPEVMRLVETRLREAYDDIDTVDGVRVELDDGWVLVRPSGTEPLIRITVEAESEERARELRDEFVDIVRRCVEEVRE.

S96 serves as the catalytic Phosphoserine intermediate. 4 residues coordinate Mg(2+): S96, D235, D237, and D239. At S96 the chain carries Phosphoserine.

This sequence belongs to the phosphohexose mutase family. Requires Mg(2+) as cofactor. In terms of processing, activated by phosphorylation.

It catalyses the reaction alpha-D-glucosamine 1-phosphate = D-glucosamine 6-phosphate. In terms of biological role, catalyzes the conversion of glucosamine-6-phosphate to glucosamine-1-phosphate. The chain is Probable phosphoglucosamine mutase from Methanopyrus kandleri (strain AV19 / DSM 6324 / JCM 9639 / NBRC 100938).